The primary structure comprises 80 residues: Centromere protein X (80 aa).

Belongs to the CENP-X/MHF2 family. As to quaternary structure, heterodimer with CENPX, sometimes called MHF; this interaction stabilizes both partners. MHF heterodimers can assemble to form tetrameric structures. MHF also coassemble with CENPT-CENPW heterodimers at centromeres to form the tetrameric CENP-T-W-S-X complex. Forms a discrete complex with FANCM and CENPX, called FANCM-MHF; this interaction, probably mediated by direct binding between CENPS and FANCM, leads to synergistic activation of double-stranded DNA binding and strongly stimulates FANCM-mediated DNA remodeling. Recruited by FANCM to the Fanconi anemia (FA) core complex, which consists of CENPS, CENPX, FANCA, FANCB, FANCC, FANCE, FANCF, FANCG, FANCL, FANCM, FAAP24 and FAAP100. The FA core complex associates with Bloom syndrome (BLM) complex, which consists of at least BLM, DNA topoisomerase 3-alpha (TOP3A), RMI1/BLAP75, RPA1/RPA70 and RPA2/RPA32. The super complex between FA and BLM is called BRAFT.

It is found in the nucleus. It localises to the chromosome. The protein localises to the centromere. The protein resides in the kinetochore. In terms of biological role, DNA-binding component of the Fanconi anemia (FA) core complex. Required for the normal activation of the FA pathway, leading to monoubiquitination of the FANCI-FANCD2 complex in response to DNA damage, cellular resistance to DNA cross-linking drugs, and prevention of chromosomal breakage. In complex with CENPS (MHF heterodimer), crucial cofactor for FANCM in both binding and ATP-dependent remodeling of DNA. Stabilizes FANCM. In complex with CENPS and FANCM (but not other FANC proteins), rapidly recruited to blocked forks and promotes gene conversion at blocked replication forks. In complex with CENPS, CENPT and CENPW (CENP-T-W-S-X heterotetramer), involved in the formation of a functional kinetochore outer plate, which is essential for kinetochore-microtubule attachment and faithful mitotic progression. As a component of MHF and CENP-T-W-S-X complexes, binds DNA and bends it to form a nucleosome-like structure. DNA-binding function is fulfilled in the presence of CENPS, with the following preference for DNA substates: Holliday junction &gt; double-stranded &gt; splay arm &gt; single-stranded. Does not bind DNA on its own. The chain is Centromere protein X (CENPX) from Gallus gallus (Chicken).